A 283-amino-acid polypeptide reads, in one-letter code: Elongation factor Ts (283 aa).

The segment at 80–83 (TDFV) is involved in Mg(2+) ion dislocation from EF-Tu.

Belongs to the EF-Ts family.

It is found in the cytoplasm. Its function is as follows. Associates with the EF-Tu.GDP complex and induces the exchange of GDP to GTP. It remains bound to the aminoacyl-tRNA.EF-Tu.GTP complex up to the GTP hydrolysis stage on the ribosome. This Salmonella paratyphi A (strain ATCC 9150 / SARB42) protein is Elongation factor Ts.